Consider the following 477-residue polypeptide: Inositol phosphosphingolipids phospholipase C (477 aa).

Over 1–398 (MYNRKDRDVH…QRQKFFRGLH (398 aa)) the chain is Cytoplasmic. Residue Glu100 participates in Mg(2+) binding. His334 (proton acceptor) is an active-site residue. A helical membrane pass occupies residues 399–417 (FWASILLLIASLVVTTFTA). Residues 418-424 (NKAGWSS) lie on the Mitochondrial intermembrane side of the membrane. The helical transmembrane segment at 425–449 (IFWVLFAIAVSISGTIDGAISFLFG) threads the bilayer. The Cytoplasmic portion of the chain corresponds to 450–477 (RSEIRALIEVEQEVLDAEHHLQTFLSEK).

The protein belongs to the neutral sphingomyelinase family. Mg(2+) is required as a cofactor.

It is found in the endoplasmic reticulum membrane. The protein localises to the mitochondrion outer membrane. It carries out the reaction an N-acyl-(4R)-4-hydroxysphinganine-1-phosphoinositol + H2O = 1D-myo-inositol 1-phosphate + an N-acyl-(4R)-4-hydroxysphinganine + H(+). It catalyses the reaction a mannosylinositol-1-phospho-N-acyl-sphingoid base + H2O = mannosylinositol-1-phosphate + an N-acyl-sphingoid base + H(+). The catalysed reaction is an inositol phosphomannosylinositol-1-phospho-N-acyl-(4R)-4-hydroxysphinganine + H2O = mannosyldiinositol-1-phosphate + an N-acyl-(4R)-4-hydroxysphinganine + H(+). It participates in lipid metabolism; sphingolipid metabolism. Its activity is regulated as follows. Activated through localization to mitochondria in specific growth phases. In terms of biological role, responsible for the hydrolysis of the phosphosphingolipids (IPS), inositol phosphorylceramide (IPC), mannosylinositol phosphorylceramide (MIPC), and mannosyldiinositol phosphorylceramide (M(IP)2C). Regulates sphingolipid metabolism in mitochondria, especially the formation of alpha-hydroxylated very long chain phytoceramides. The generated ceramides contribute to the normal function of mitochondria. Also active on sphingomyelin (SM), but this activity is probably not physiologically relevant. The sequence is that of Inositol phosphosphingolipids phospholipase C from Saccharomyces cerevisiae (strain ATCC 204508 / S288c) (Baker's yeast).